Here is a 477-residue protein sequence, read N- to C-terminus: M-phase inducer phosphatase 3 (477 aa).

The interval 1 to 20 (MSAEFFSSKREEGSLASGPS) is disordered. Ser2 is modified (N-acetylserine). Residues Ser20 and Ser38 each carry the phosphoserine modification. Thr48 carries the post-translational modification Phosphothreonine; by CDK1. Ser58, Ser62, and Ser65 each carry phosphoserine. Phosphothreonine; by CDK1 is present on Thr68. Ser123 carries the post-translational modification Phosphoserine; by CDK1. Ser130 is subject to Phosphoserine. Thr131 is subject to Phosphothreonine. A Phosphoserine; by CDK1 modification is found at Ser169. Phosphoserine; by PLK3 occurs at positions 192 and 199. Ser218 bears the Phosphoserine; by CDK1 mark. A Phosphoserine; by CHEK1, CHEK2, BRSK1, MAPK14 AND MARK3 modification is found at Ser220. Positions 325 to 432 (LIEKFYIIDC…FFPEYMELCE (108 aa)) constitute a Rhodanese domain. The active site involves Cys381. Ser476 is modified (phosphoserine).

This sequence belongs to the MPI phosphatase family. As to quaternary structure, interacts with MAPK14 and 14-3-3 proteins. When phosphorylated on Ser-130 and/or Thr-131, interacts with PLK1. Interacts with MARK3/C-TAK1. In terms of processing, phosphorylated by CHEK1 and MAPK14 at Ser-220. This phosphorylation creates a binding site for 14-3-3 protein and inhibits the phosphatase. Phosphorylated by PLK4. Phosphorylated by PLK1, leading to activate the phosphatase activity. Phosphorylation by PLK3 at Ser-192 promotes nuclear translocation. Ser-199 is a minor phosphorylation site. Phosphorylation by CDK1 occurs at G2 and G2-M transition and leads to increased activity.

It is found in the nucleus. The catalysed reaction is O-phospho-L-tyrosyl-[protein] + H2O = L-tyrosyl-[protein] + phosphate. Functions as a dosage-dependent inducer in mitotic control. Tyrosine protein phosphatase required for progression of the cell cycle. When phosphorylated, highly effective in activating G2 cells into prophase. Directly dephosphorylates CDK1 and activates its kinase activity. The chain is M-phase inducer phosphatase 3 (CDC25C) from Bos taurus (Bovine).